We begin with the raw amino-acid sequence, 374 residues long: Multicilin (374 aa).

Disordered regions lie at residues 18–72 (CPNR…ALPA) and 84–105 (CSSF…QSHS). A coiled-coil region spans residues 168–216 (EQYWKEVADQNQRALGDALIENNQLHATLTQKQEEIASLKERNLQLKEL). Positions 284-306 (LQSRDPKRLRLQPEPQSLDRRPG) are disordered.

This sequence belongs to the geminin family. Heterodimer (via coiled-coil domain) with GMNN (via coiled-coil domain); targets GMNN to the nucleus. Can form homodimers (in vitro, via coiled-coil domain), but these are much less stable than the heterodimer formed with GMNN.

It is found in the nucleus. Its function is as follows. Transcription regulator specifically required for multiciliate cell differentiation. Acts in a multiprotein complex containing E2F4 and E2F5 that binds and activates genes required for centriole biogenesis. Required for the deuterosome-mediated acentriolar pathway. Plays a role in mitotic cell cycle progression by promoting cell cycle exit. Modulates GMNN activity by reducing its affinity for CDT1. This chain is Multicilin (MCIDAS), found in Bos taurus (Bovine).